The primary structure comprises 504 residues: Topoisomerase I damage affected protein 11 (504 aa).

The interval 32 to 62 is disordered; the sequence is RKTGRKIRSASSNGYRLEHHRTSSAGSMHSQ. Residues 179 to 231 adopt a coiled-coil conformation; that stretch reads ALLQSLATKELELLECKQKIEDLKKQTQHEEQNYTRRARELHELKEQVSKHLD. T236 is subject to Phosphothreonine. Phosphoserine is present on residues S244 and S286. Disordered stretches follow at residues 252–306, 332–377, and 400–504; these read LESR…SKQS, WDDS…SVSR, and DVIT…MTDF. The segment covering 257–287 has biased composition (polar residues); the sequence is ENAGNSSLPSSVSKPKNMGHQSTNQSRSVSP. Positions 290-301 are enriched in basic and acidic residues; sequence IQERRQRDDSSD. Polar residues-rich tracts occupy residues 332–359 and 368–377; these read WDDSLSGTPEVQEGTPTSNSESSAQQYD and KSPSQGSVSR. Residues 403 to 421 show a composition bias toward basic and acidic residues; it reads TDNRCDPVYKSDRQHEQKK. Residues 470 to 479 are compositionally biased toward basic residues; sequence TREKKSKRSS. Over residues 491–504 the composition is skewed to polar residues; the sequence is DNSSVKNSVEMTDF.

This sequence belongs to the TDA11 family.

Its subcellular location is the cytoplasm. In Saccharomyces cerevisiae (strain ATCC 204508 / S288c) (Baker's yeast), this protein is Topoisomerase I damage affected protein 11 (TDA11).